The following is a 340-amino-acid chain: Solute-binding protein Dde_0634 (340 aa).

Positions 1 to 29 (MKSTFAALLIMVGCLVSGALLTGSEAAAA) are cleaved as a signal peptide. Residues tyrosine 99, arginine 172, 210-213 (TSLD), and tyrosine 235 each bind (indol-3-yl)acetate.

Belongs to the bacterial solute-binding protein 7 family. The complex is comprised of an extracytoplasmic solute-binding protein and a heteromeric permease formed by two transmembrane proteins.

It is found in the periplasm. Functionally, solute-binding protein that binds indole-3-pyruvate and indole-3-acetate (in vitro). Can also bind D-tryptophan (in vitro), but that is probably not a physiological ligand. Probably part of a tripartite ATP-independent periplasmic (TRAP) transport system that mediates solute transport into the cytoplasm. The polypeptide is Solute-binding protein Dde_0634 (Oleidesulfovibrio alaskensis (strain ATCC BAA-1058 / DSM 17464 / G20) (Desulfovibrio alaskensis)).